The chain runs to 178 residues: Large ribosomal subunit protein uL6 (178 aa).

The protein belongs to the universal ribosomal protein uL6 family. As to quaternary structure, part of the 50S ribosomal subunit.

Functionally, this protein binds to the 23S rRNA, and is important in its secondary structure. It is located near the subunit interface in the base of the L7/L12 stalk, and near the tRNA binding site of the peptidyltransferase center. The sequence is that of Large ribosomal subunit protein uL6 from Tropheryma whipplei (strain TW08/27) (Whipple's bacillus).